A 46-amino-acid chain; its full sequence is Endochitinase 3 (46 aa).

The tract at residues 1 to 21 (MTPQGNKPSSHDVITGRWTPS) is disordered.

This sequence belongs to the glycosyl hydrolase 19 family. Chitinase class I subfamily.

It catalyses the reaction Random endo-hydrolysis of N-acetyl-beta-D-glucosaminide (1-&gt;4)-beta-linkages in chitin and chitodextrins.. Functionally, defense against chitin-containing fungal and bacterial pathogens. This is Endochitinase 3 from Arachis hypogaea (Peanut).